Reading from the N-terminus, the 185-residue chain is Peptide deformylase (185 aa).

Positions 94 and 136 each coordinate Fe cation. The active site involves Glu137. His140 provides a ligand contact to Fe cation.

This sequence belongs to the polypeptide deformylase family. Fe(2+) is required as a cofactor.

The catalysed reaction is N-terminal N-formyl-L-methionyl-[peptide] + H2O = N-terminal L-methionyl-[peptide] + formate. In terms of biological role, removes the formyl group from the N-terminal Met of newly synthesized proteins. Requires at least a dipeptide for an efficient rate of reaction. N-terminal L-methionine is a prerequisite for activity but the enzyme has broad specificity at other positions. The chain is Peptide deformylase from Chlorobium phaeobacteroides (strain BS1).